Reading from the N-terminus, the 292-residue chain is 4-hydroxy-tetrahydrodipicolinate synthase (292 aa).

A pyruvate-binding site is contributed by threonine 45. Tyrosine 133 acts as the Proton donor/acceptor in catalysis. Lysine 161 (schiff-base intermediate with substrate) is an active-site residue. A pyruvate-binding site is contributed by isoleucine 203.

It belongs to the DapA family. As to quaternary structure, homotetramer; dimer of dimers.

It localises to the cytoplasm. The catalysed reaction is L-aspartate 4-semialdehyde + pyruvate = (2S,4S)-4-hydroxy-2,3,4,5-tetrahydrodipicolinate + H2O + H(+). The protein operates within amino-acid biosynthesis; L-lysine biosynthesis via DAP pathway; (S)-tetrahydrodipicolinate from L-aspartate: step 3/4. In terms of biological role, catalyzes the condensation of (S)-aspartate-beta-semialdehyde [(S)-ASA] and pyruvate to 4-hydroxy-tetrahydrodipicolinate (HTPA). This is 4-hydroxy-tetrahydrodipicolinate synthase from Salmonella paratyphi A (strain AKU_12601).